The chain runs to 991 residues: KAT8 regulatory NSL complex subunit 1-like protein (991 aa).

Lys136 participates in a covalent cross-link: Glycyl lysine isopeptide (Lys-Gly) (interchain with G-Cter in SUMO2). Positions 443-462 are disordered; sequence VNSQVPQRSEEPLPEHDFEM. Basic and acidic residues predominate over residues 450-461; the sequence is RSEEPLPEHDFE. Ser463 is modified (phosphoserine). Residues 749–763 are compositionally biased toward polar residues; the sequence is ANVTSRTQNPSSQNT. A disordered region spans residues 749 to 770; it reads ANVTSRTQNPSSQNTSRRRLRS. Positions 798-919 constitute a PEHE domain; it reads EILTPRWRKV…DGQEDKSLRW (122 aa). Residue Lys863 is modified to N6-acetyllysine.

Acetylated on lysine residues by KAT8 upon ionizing radiation-induced DNA damage; deacetylated by HDAC3.

The polypeptide is KAT8 regulatory NSL complex subunit 1-like protein (Kansl1l) (Mus musculus (Mouse)).